The following is a 1227-amino-acid chain: Beta-alanyl-bioamine nonribosomal peptide synthetase (1227 aa).

The tract at residues 1–850 (MPQSTAQLKS…FGKNSRDFKL (850 aa)) is adenylation. The Carrier domain maps to 851 to 931 (SRGRERARKV…SILTSLQNTE (81 aa)). S892 bears the O-(pantetheine 4'-phosphoryl)serine mark. The condensation stretch occupies residues 932–1227 (SDFLKTQEPF…YMIKELNPSS (296 aa)).

The protein belongs to the NRP synthetase family. Pantetheine 4'-phosphate serves as cofactor. As to expression, in virgin and paired males, bilaterally expressed in some cells in the head. During pairing, expressed throughout the ventral side of the body probably in ciliated neurons. Highly expressed in virgin females in cells throughout the body and only weakly expressed in sexually mature females. In virgin females, expressed in some cells in the head and on the dorsal surface and lateral edges of body.

It catalyses the reaction tryptamine + beta-alanine + ATP = beta-alanyl-tryptamine + AMP + diphosphate + H(+). The enzyme catalyses beta-alanine + ATP + H(+) = beta-alanyl-5'-AMP + diphosphate. The catalysed reaction is beta-alanyl-5'-AMP + holo-[peptidyl-carrier protein] = beta-alanyl-[peptidyl-carrier protein] + AMP + H(+). It carries out the reaction beta-alanyl-[peptidyl-carrier protein] + tryptamine = beta-alanyl-tryptamine + holo-[peptidyl-carrier protein] + H(+). Functionally, catalyzes the condensation of beta-alanine with tryptamine to form beta-alanyl-tryptamine (BATT). Beta-alanyl-tryptamine is an essential pheromone produced by the male that stimulates female sexual development during pairing. The chain is Beta-alanyl-bioamine nonribosomal peptide synthetase from Schistosoma mansoni (Blood fluke).